The primary structure comprises 1226 residues: MKITFYMWASYCSILKKALDELKKEGVDVEYKIYSNRNPIDDEFLEDAKDYDLVFIYRTSSDDIDLEKIKKFNENVIVVAQDPNFWNSEKSAKCYLFITYGGLDNFKNMVLYLMGKDKDVVKHPFQGIYYRGKIYEELEEFLKDVEFNKKYTVGILFSRHYLVNDDMDVIEKLLNRLDKEFNVIPVFSYGAKCEDLNALGSGESVLKYFLKDDKPIIDALINLLSFPLGTVKDKANLNKISGVEILKKLDVPVFHPIMSYYKSYEDWKKDEQGLSADIGWTIALPEFEGVIEPIIIGTTENENGLEKKFGIEERIDKVVRRIKRWIELKYKPKKDRKVIFILHNNACASVEATVGSAAHLDSFQSVINIMKKLKEEGYYVENIPENGEELAQLIMQKKAISEFRWTTVNEIIAKGGYLYLMDEEEYYEYFNTLPENVKNKILETWGDLNGKDIPAGMIYKVNGKNKIVITGLKFGNVYVCVQPKRGCAGARCDGRVCKILHDPYCPPTHQYIASYKYFNDIADIIIHVGTHGTLEFLPGKNVGLSNECYPDICIGDIPHLYIYNSDNPPEGTIAKRRSYATIIDHMQTVMVDAFYEELETLDSYIEEYLKEMDASRRHQLEHLIVEEVKKTNLLKIKEKIEKIEKEGKIHENFKEIFDELRDILEMIKNSKCNDGMHIFGELPSGEKRVEFIKSILEAIFIQNNTMNSKRRGIAERSEAMHPGYPNRGLPPMEFEYKDKNLKKKVSDVLNGKSIEDKKLEEKIKDINERIEKSDEIGSLLRGIDAKYIEPGPSGLITRGNYDILPTGRNFYSLDPYRIPTKSAYRVGVLLAEKLINRYLEEEGRYPENIALYWMASDIMWADGEGMGMILYLLGVKPVYRGGRVVGLEVIPLEELGRPRIDVTIRVSGITRDMFPNCIELVDEAIMKVANLDEPLEMNFVKKHVVENLNKGLSFRESTFRIFCSPPGTYGNGVKYAVYASAWENDEDLKDAFIYWNSYAYGKDVYGKKAINAFENILKTVDLTFNKVVTDEYDLFGCCCYFGTHGGLTNAARVLKGEEVKAYYGDTRNPNNVEVRTLKEEIERVSLTKLLNPKWIEGMKRHGYKGAGDIAKRIGRVYGWSATTKEVENWIFDEIFNTFVKNEENRKFFKEHNIYALEEIARRLLEAYQRGLWKTTEGNIEELKRAYLEIEGDIEETYSSIADIGEFQGGSVDIDMIWKEKLMSNGR.

Belongs to the Mg-chelatase subunit H family.

This is an uncharacterized protein from Methanocaldococcus jannaschii (strain ATCC 43067 / DSM 2661 / JAL-1 / JCM 10045 / NBRC 100440) (Methanococcus jannaschii).